Reading from the N-terminus, the 209-residue chain is Uracil phosphoribosyltransferase (209 aa).

5-phospho-alpha-D-ribose 1-diphosphate is bound by residues R79, R104, and 131 to 139; that span reads DPMLATGGS. Residues I194 and 199–201 each bind uracil; that span reads GDA. Residue D200 coordinates 5-phospho-alpha-D-ribose 1-diphosphate.

It belongs to the UPRTase family. Requires Mg(2+) as cofactor.

The catalysed reaction is UMP + diphosphate = 5-phospho-alpha-D-ribose 1-diphosphate + uracil. Its pathway is pyrimidine metabolism; UMP biosynthesis via salvage pathway; UMP from uracil: step 1/1. With respect to regulation, allosterically activated by GTP. In terms of biological role, catalyzes the conversion of uracil and 5-phospho-alpha-D-ribose 1-diphosphate (PRPP) to UMP and diphosphate. The protein is Uracil phosphoribosyltransferase of Streptococcus salivarius.